A 476-amino-acid chain; its full sequence is Lactate utilization protein B (476 aa).

4Fe-4S ferredoxin-type domains follow at residues glycine 304 to tyrosine 334 and tyrosine 353 to leucine 382. 7 residues coordinate [4Fe-4S] cluster: cysteine 313, cysteine 316, cysteine 319, cysteine 323, cysteine 366, cysteine 369, and cysteine 373. The interval arginine 452–serine 476 is disordered.

The protein belongs to the LutB/YkgF family.

In terms of biological role, is involved in L-lactate degradation and allows cells to grow with lactate as the sole carbon source. Has probably a role as an electron transporter during oxidation of L-lactate. This chain is Lactate utilization protein B, found in Lysinibacillus sphaericus (strain C3-41).